We begin with the raw amino-acid sequence, 293 residues long: Zinc metalloproteinase nas-2 (293 aa).

A signal peptide spans 1 to 17 (MIFPLLLTLILPNFVAP). Positions 18–67 (KVLEPEKDDEIAVSTQREKTFFDMKLILTKLPTFEPSKYGHINIPLRKKR) are excised as a propeptide. The region spanning 67–260 (RGIALHPLQW…ININTFYKCK (194 aa)) is the Peptidase M12A domain. Asn111 is a glycosylation site (N-linked (GlcNAc...) asparagine). 2 disulfides stabilise this stretch: Cys114-Cys259 and Cys139-Cys169. His180 contributes to the Zn(2+) binding site. Residue Glu181 is part of the active site. The Zn(2+) site is built by His184 and His190. The N-linked (GlcNAc...) asparagine glycan is linked to Asn287.

Zn(2+) is required as a cofactor.

The protein localises to the secreted. Its function is as follows. Metalloprotease. The sequence is that of Zinc metalloproteinase nas-2 (nas-2) from Caenorhabditis elegans.